We begin with the raw amino-acid sequence, 119 residues long: Ribonuclease P protein component (119 aa).

This sequence belongs to the RnpA family. In terms of assembly, consists of a catalytic RNA component (M1 or rnpB) and a protein subunit.

The enzyme catalyses Endonucleolytic cleavage of RNA, removing 5'-extranucleotides from tRNA precursor.. In terms of biological role, RNaseP catalyzes the removal of the 5'-leader sequence from pre-tRNA to produce the mature 5'-terminus. It can also cleave other RNA substrates such as 4.5S RNA. The protein component plays an auxiliary but essential role in vivo by binding to the 5'-leader sequence and broadening the substrate specificity of the ribozyme. The protein is Ribonuclease P protein component of Yersinia enterocolitica serotype O:8 / biotype 1B (strain NCTC 13174 / 8081).